The sequence spans 103 residues: Pyrimidine/purine nucleoside phosphorylase (103 aa).

The protein belongs to the nucleoside phosphorylase PpnP family.

It catalyses the reaction a purine D-ribonucleoside + phosphate = a purine nucleobase + alpha-D-ribose 1-phosphate. The enzyme catalyses adenosine + phosphate = alpha-D-ribose 1-phosphate + adenine. It carries out the reaction cytidine + phosphate = cytosine + alpha-D-ribose 1-phosphate. The catalysed reaction is guanosine + phosphate = alpha-D-ribose 1-phosphate + guanine. It catalyses the reaction inosine + phosphate = alpha-D-ribose 1-phosphate + hypoxanthine. The enzyme catalyses thymidine + phosphate = 2-deoxy-alpha-D-ribose 1-phosphate + thymine. It carries out the reaction uridine + phosphate = alpha-D-ribose 1-phosphate + uracil. The catalysed reaction is xanthosine + phosphate = alpha-D-ribose 1-phosphate + xanthine. In terms of biological role, catalyzes the phosphorolysis of diverse nucleosides, yielding D-ribose 1-phosphate and the respective free bases. Can use uridine, adenosine, guanosine, cytidine, thymidine, inosine and xanthosine as substrates. Also catalyzes the reverse reactions. This Shewanella baltica (strain OS195) protein is Pyrimidine/purine nucleoside phosphorylase.